The primary structure comprises 142 residues: FAD synthase (142 aa).

ATP is bound by residues threonine 9–phenylalanine 10, histidine 14–histidine 17, aspartate 92, and tyrosine 119.

Belongs to the archaeal FAD synthase family. Homodimer. It depends on a divalent metal cation as a cofactor.

It catalyses the reaction FMN + ATP + H(+) = FAD + diphosphate. It participates in cofactor biosynthesis; FAD biosynthesis; FAD from FMN: step 1/1. Catalyzes the transfer of the AMP portion of ATP to flavin mononucleotide (FMN) to produce flavin adenine dinucleotide (FAD) coenzyme. This is FAD synthase from Halorhabdus utahensis (strain DSM 12940 / JCM 11049 / AX-2).